A 431-amino-acid chain; its full sequence is Dihydroorotase (431 aa).

Residues His-55 and His-57 each contribute to the Zn(2+) site. Residues 57-59 (HFR) and Asn-89 contribute to the substrate site. Residues Lys-139, His-169, His-223, and Asp-290 each contribute to the Zn(2+) site. At Lys-139 the chain carries N6-carboxylysine. Asp-290 is an active-site residue. Substrate is bound by residues His-294 and 308 to 309 (PG).

This sequence belongs to the metallo-dependent hydrolases superfamily. DHOase family. Class I DHOase subfamily. Zn(2+) is required as a cofactor.

It catalyses the reaction (S)-dihydroorotate + H2O = N-carbamoyl-L-aspartate + H(+). The protein operates within pyrimidine metabolism; UMP biosynthesis via de novo pathway; (S)-dihydroorotate from bicarbonate: step 3/3. In terms of biological role, catalyzes the reversible cyclization of carbamoyl aspartate to dihydroorotate. This chain is Dihydroorotase, found in Methanothermobacter thermautotrophicus (strain ATCC 29096 / DSM 1053 / JCM 10044 / NBRC 100330 / Delta H) (Methanobacterium thermoautotrophicum).